Reading from the N-terminus, the 721-residue chain is Ribonucleoside-diphosphate reductase subunit alpha (721 aa).

Substrate-binding positions include T168, 184–185 (SC), G213, 393–397 (NLCSE), and 595–599 (PTGSI). C185 and C422 form a disulfide bridge. Residue N393 is the Proton acceptor of the active site. C395 serves as the catalytic Cysteine radical intermediate. Residue E397 is the Proton acceptor of the active site.

This sequence belongs to the ribonucleoside diphosphate reductase large chain family. Tetramer of two alpha and two beta subunits.

It catalyses the reaction a 2'-deoxyribonucleoside 5'-diphosphate + [thioredoxin]-disulfide + H2O = a ribonucleoside 5'-diphosphate + [thioredoxin]-dithiol. With respect to regulation, under complex allosteric control mediated by deoxynucleoside triphosphates and ATP binding. The type of nucleotide bound at the specificity site determines substrate preference. It seems probable that ATP makes the enzyme reduce CDP and UDP, dGTP favors ADP reduction and dTTP favors GDP reduction. Provides the precursors necessary for DNA synthesis. Catalyzes the biosynthesis of deoxyribonucleotides from the corresponding ribonucleotides. In Mycobacterium leprae (strain TN), this protein is Ribonucleoside-diphosphate reductase subunit alpha (nrdE).